The primary structure comprises 853 residues: E3 ubiquitin-protein ligase ZNRF3 (853 aa).

A signal peptide spans 1 to 28; the sequence is MKEPRIRGGLPLVWLWVLLAVAPGESLA. The Extracellular portion of the chain corresponds to 29-192; the sequence is KETAFVEVVL…PRQPTEYFDM (164 aa). A helical transmembrane segment spans residues 193–213; it reads GIFLAFFVVVSLVCLILLIKI. The Cytoplasmic segment spans residues 214 to 853; it reads KLKQRRSQNS…GQDCHPTDRD (640 aa). Residues 266-307 form an RING-type; atypical zinc finger; it reads CAICLEKYIDGEELRVIPCTHRFHKRCVDPWLLQNHTCPHCR. 4 disordered regions span residues 583–629, 650–673, 685–713, and 834–853; these read SRSP…RLSS, SSGT…RGPE, GDPS…GGLY, and TGKE…TDRD. The segment covering 589–607 has biased composition (gly residues); the sequence is TGGGDAPGCGGEGGTGSGR. Polar residues predominate over residues 615-629; that stretch reads HQTFPNSPSRDRLSS.

The protein belongs to the ZNRF3 family.

Its subcellular location is the cell membrane. The catalysed reaction is S-ubiquitinyl-[E2 ubiquitin-conjugating enzyme]-L-cysteine + [acceptor protein]-L-lysine = [E2 ubiquitin-conjugating enzyme]-L-cysteine + N(6)-ubiquitinyl-[acceptor protein]-L-lysine.. The protein operates within protein modification; protein ubiquitination. Its function is as follows. E3 ubiquitin-protein ligase that acts as a negative regulator of the Wnt signaling pathway by mediating the ubiquitination and subsequent degradation of Wnt receptor complex components. Along with RSPO2 and RNF43, constitutes a master switch that governs limb specification. In Xenopus tropicalis (Western clawed frog), this protein is E3 ubiquitin-protein ligase ZNRF3 (znrf3).